The sequence spans 468 residues: uncharacterized protein (468 aa).

Residues 1 to 69 (MKKYQQLAEQ…PQSGYYVAPQ (69 aa)) form the HTH gntR-type domain. N6-(pyridoxal phosphate)lysine is present on Lys312.

This sequence in the C-terminal section; belongs to the class-I pyridoxal-phosphate-dependent aminotransferase family.

This is an uncharacterized protein from Escherichia coli (strain K12).